Here is a 31-residue protein sequence, read N- to C-terminus: Cytochrome b6-f complex subunit 6 (31 aa).

Residues 4–24 (VIAYLGLLASVLIGTIVIYLG) form a helical membrane-spanning segment.

This sequence belongs to the PetL family. As to quaternary structure, the 4 large subunits of the cytochrome b6-f complex are cytochrome b6, subunit IV (17 kDa polypeptide, PetD), cytochrome f and the Rieske protein, while the 4 small subunits are PetG, PetL, PetM and PetN. The complex functions as a dimer.

The protein localises to the plastid. It is found in the chloroplast thylakoid membrane. Functionally, component of the cytochrome b6-f complex, which mediates electron transfer between photosystem II (PSII) and photosystem I (PSI), cyclic electron flow around PSI, and state transitions. PetL is important for photoautotrophic growth as well as for electron transfer efficiency and stability of the cytochrome b6-f complex. This is Cytochrome b6-f complex subunit 6 from Oltmannsiellopsis viridis (Marine flagellate).